Reading from the N-terminus, the 109-residue chain is Putative double-stranded DNA mimic protein YciU (109 aa).

This sequence belongs to the putative dsDNA mimic protein family.

Its function is as follows. May act as a double-stranded DNA (dsDNA) mimic. Probably regulates the activity of a dsDNA-binding protein. This chain is Putative double-stranded DNA mimic protein YciU, found in Salmonella choleraesuis (strain SC-B67).